Reading from the N-terminus, the 535-residue chain is BAR/IMD domain-containing adapter protein 2 (535 aa).

Residues 1-250 (MSLSRSEEMH…AQLMQQMANS (250 aa)) form the IMD domain. Residues 1–251 (MSLSRSEEMH…QLMQQMANSN (251 aa)) adopt a coiled-coil conformation. Phosphoserine is present on residues Ser262, Ser324, Ser326, and Ser337. Residues 308-370 (SEDYNPWADR…TLPRSSSMAA (63 aa)) form a disordered region. Residues 321–335 (QPKSLSPPQSQSKLS) are compositionally biased toward low complexity. Thr341 bears the Phosphothreonine mark. Ser347 is modified (phosphoserine). Residues 349–368 (TPKNSYATTENKTLPRSSSM) show a composition bias toward polar residues. The residue at position 361 (Thr361) is a Phosphothreonine. Ser367, Ser385, Ser396, and Ser455 each carry phosphoserine. Residues 375–438 (NGRMRVKAIF…PFSYTRVLDS (64 aa)) enclose the SH3 domain. The interval 445-486 (HMSLQQGKSSSTGNLLDKDDLALPPPDYGTSSRAFPSQTAGT) is disordered. Composition is skewed to polar residues over residues 447-458 (SLQQGKSSSTGN) and 473-486 (GTSS…TAGT).

Homodimer. Interacts with CDC42 and RAC1 that have been activated by GTP binding. Binds TIAM1. Interacts with ATN1, ADGRB1, DIAPH1, EPS8, SHANK1, SHANK2, SHANK3, WASF1 and WASF2. Interacts with ENAH after recruitment of CDC42. Post-translationally, phosphorylated on tyrosine residues by INSR in response to insulin treatment. Ubiquitous.

It is found in the cytoplasm. The protein resides in the membrane. It localises to the cell projection. Its subcellular location is the filopodium. The protein localises to the ruffle. It is found in the cytoskeleton. Adapter protein that links membrane-bound small G-proteins to cytoplasmic effector proteins. Necessary for CDC42-mediated reorganization of the actin cytoskeleton and for RAC1-mediated membrane ruffling. Involved in the regulation of the actin cytoskeleton by WASF family members and the Arp2/3 complex. Plays a role in neurite growth. Acts syngeristically with ENAH to promote filipodia formation. Plays a role in the reorganization of the actin cytoskeleton in response to bacterial infection. Participates in actin bundling when associated with EPS8, promoting filopodial protrusions. In Rattus norvegicus (Rat), this protein is BAR/IMD domain-containing adapter protein 2 (Baiap2).